We begin with the raw amino-acid sequence, 397 residues long: Elongation factor Tu 1 (397 aa).

One can recognise a tr-type G domain in the interval 10–206; that stretch reads KPHVNIGTIG…AVDENIPQPE (197 aa). Residues 19 to 26 form a G1 region; it reads GHIDHGKT. A GTP-binding site is contributed by 19 to 26; that stretch reads GHIDHGKT. Mg(2+) is bound at residue Thr26. The interval 62-66 is G2; it reads GITIS. The interval 83-86 is G3; the sequence is DCPG. Residues 83 to 87 and 138 to 141 contribute to the GTP site; these read DCPGH and NKAD. A G4 region spans residues 138–141; it reads NKAD. Residues 176-178 are G5; that stretch reads SAL.

Belongs to the TRAFAC class translation factor GTPase superfamily. Classic translation factor GTPase family. EF-Tu/EF-1A subfamily. As to quaternary structure, monomer.

Its subcellular location is the cytoplasm. It carries out the reaction GTP + H2O = GDP + phosphate + H(+). In terms of biological role, GTP hydrolase that promotes the GTP-dependent binding of aminoacyl-tRNA to the A-site of ribosomes during protein biosynthesis. The protein is Elongation factor Tu 1 of Streptomyces avermitilis (strain ATCC 31267 / DSM 46492 / JCM 5070 / NBRC 14893 / NCIMB 12804 / NRRL 8165 / MA-4680).